The chain runs to 592 residues: MGEALKGLKRTIMCGQLREENINEQHTVMGWVQRKRNLGGLIFIDLRDRDGILQVVFGEEINKEAFEKADTVRSEYCLAVTGKIIKRQAVNENLPTGIVELQGESIKILSESETPPIYIKEDLDAAENIRLKYRYLDLRRPDMQKILKIRHKTAKAVRDFLDKEEFLEVETPMLTKSTPEGARDYLVPSRNYPGMFYALPQSPQLFKQLLMVSGFDKYFQIVKCFRDEDLRANRQPEFTQIDLEMSFVEMDDVIDLNERLIQYVFKNVVGKDIKLPIERMPYKIAMSKYGSDKPDLRFGMEIENLDDVLKETSFKVFKEVIDNGGTVSAIKAENCAGMGRKQIDKLGDFVKTFKAKGLAWIAYKEDEIKSPIAKFLTEEELKSIIDKMDAKVGDLILIVSDAKEKVVQQSLGQLRLHLAKELGLLKDNDELRFVWVTEFPLVSYNEEEDRWEAEHHPFTAPMDEDIQYLDTDPGKVRAKAYDIVLNGEELGGGSIRIHDTKLQEKMFEVLGFTEEKAWERFGFLLEAFKFGPPPHGGLAFGFDRMIMFLSGTENIKDVIAFPKNQNAFCPMTEAPNVVDEVQLDELGIKIKK.

An L-aspartate-binding site is contributed by glutamate 180. The interval 204 to 207 (QLFK) is aspartate. Residue arginine 226 coordinates L-aspartate. Residues 226–228 (RDE) and glutamine 235 contribute to the ATP site. L-aspartate is bound at residue histidine 455. Residue glutamate 489 participates in ATP binding. An L-aspartate-binding site is contributed by arginine 496. An ATP-binding site is contributed by 541-544 (GFDR).

Belongs to the class-II aminoacyl-tRNA synthetase family. Type 1 subfamily. In terms of assembly, homodimer.

It is found in the cytoplasm. The enzyme catalyses tRNA(Asp) + L-aspartate + ATP = L-aspartyl-tRNA(Asp) + AMP + diphosphate. Its function is as follows. Catalyzes the attachment of L-aspartate to tRNA(Asp) in a two-step reaction: L-aspartate is first activated by ATP to form Asp-AMP and then transferred to the acceptor end of tRNA(Asp). This is Aspartate--tRNA ligase from Clostridium tetani (strain Massachusetts / E88).